We begin with the raw amino-acid sequence, 892 residues long: Alanine--tRNA ligase (892 aa).

Zn(2+)-binding residues include histidine 580, histidine 584, cysteine 682, and histidine 686.

Belongs to the class-II aminoacyl-tRNA synthetase family. Zn(2+) is required as a cofactor.

The protein resides in the cytoplasm. It carries out the reaction tRNA(Ala) + L-alanine + ATP = L-alanyl-tRNA(Ala) + AMP + diphosphate. Its function is as follows. Catalyzes the attachment of alanine to tRNA(Ala) in a two-step reaction: alanine is first activated by ATP to form Ala-AMP and then transferred to the acceptor end of tRNA(Ala). Also edits incorrectly charged Ser-tRNA(Ala) and Gly-tRNA(Ala) via its editing domain. The polypeptide is Alanine--tRNA ligase (Salinispora tropica (strain ATCC BAA-916 / DSM 44818 / JCM 13857 / NBRC 105044 / CNB-440)).